A 316-amino-acid chain; its full sequence is Acetyl-coenzyme A carboxylase carboxyl transferase subunit alpha (316 aa).

In terms of domain architecture, CoA carboxyltransferase C-terminal spans 40-293 (LEKRSRDALR…GDLIAKTMKE (254 aa)).

Belongs to the AccA family. Acetyl-CoA carboxylase is a heterohexamer composed of biotin carboxyl carrier protein (AccB), biotin carboxylase (AccC) and two subunits each of ACCase subunit alpha (AccA) and ACCase subunit beta (AccD).

The protein localises to the cytoplasm. It carries out the reaction N(6)-carboxybiotinyl-L-lysyl-[protein] + acetyl-CoA = N(6)-biotinyl-L-lysyl-[protein] + malonyl-CoA. It participates in lipid metabolism; malonyl-CoA biosynthesis; malonyl-CoA from acetyl-CoA: step 1/1. In terms of biological role, component of the acetyl coenzyme A carboxylase (ACC) complex. First, biotin carboxylase catalyzes the carboxylation of biotin on its carrier protein (BCCP) and then the CO(2) group is transferred by the carboxyltransferase to acetyl-CoA to form malonyl-CoA. This chain is Acetyl-coenzyme A carboxylase carboxyl transferase subunit alpha, found in Mesorhizobium japonicum (strain LMG 29417 / CECT 9101 / MAFF 303099) (Mesorhizobium loti (strain MAFF 303099)).